Reading from the N-terminus, the 244-residue chain is Lipoprotein-releasing system ATP-binding protein LolD (244 aa).

One can recognise an ABC transporter domain in the interval 19 to 244 (IRAEALAKTY…KLRELAPSAV (226 aa)). 55–62 (GASGAGKS) contributes to the ATP binding site.

The protein belongs to the ABC transporter superfamily. Lipoprotein translocase (TC 3.A.1.125) family. In terms of assembly, the complex is composed of two ATP-binding proteins (LolD) and two transmembrane proteins (LolC and LolE).

The protein resides in the cell inner membrane. Functionally, part of the ABC transporter complex LolCDE involved in the translocation of mature outer membrane-directed lipoproteins, from the inner membrane to the periplasmic chaperone, LolA. Responsible for the formation of the LolA-lipoprotein complex in an ATP-dependent manner. This Xanthomonas axonopodis pv. citri (strain 306) protein is Lipoprotein-releasing system ATP-binding protein LolD.